The primary structure comprises 239 residues: Cysteine-rich venom protein kaouthin-1 (239 aa).

The N-terminal stretch at 1-18 is a signal peptide; sequence MIAFSLLCLAAVLRQSFG. An SCP domain is found at 37 to 165; sequence VDLHNSLRRR…AWSYFYVCQY (129 aa). Intrachain disulfides connect Cys74/Cys152, Cys91/Cys166, Cys147/Cys163, Cys185/Cys192, Cys188/Cys197, Cys201/Cys234, Cys210/Cys228, and Cys219/Cys232. The ShKT domain maps to 201 to 234; the sequence is CTIYNKLTNCDSLLKQGSCQDDWIKSNCPASCFC.

It belongs to the CRISP family. Expressed by the venom gland.

The protein resides in the secreted. Its function is as follows. Inhibits calcium-activated potassium channels (KCa), voltage-gated potassium channel (Kv), and the calcium release channel/ryanodine receptor (RyR). The chain is Cysteine-rich venom protein kaouthin-1 from Naja kaouthia (Monocled cobra).